The sequence spans 278 residues: UPF0276 protein Shew_2240 (278 aa).

This sequence belongs to the UPF0276 family.

This chain is UPF0276 protein Shew_2240, found in Shewanella loihica (strain ATCC BAA-1088 / PV-4).